A 365-amino-acid polypeptide reads, in one-letter code: Selina-4(15),7(11)-diene synthase ((2E,6E)-farnesyl diphosphate cyclizing) (365 aa).

The Mg(2+) site is built by aspartate 82 and glutamate 87. The DDXXXE motif signature appears at aspartate 82–glutamate 87. Residue arginine 178 coordinates substrate. The Mg(2+) site is built by asparagine 224 and serine 228. Residue lysine 231 participates in substrate binding. A Mg(2+)-binding site is contributed by glutamate 232. Substrate is bound at residue arginine 310–tyrosine 311.

The protein belongs to the terpene synthase family. In terms of assembly, monomer. Mg(2+) serves as cofactor.

The enzyme catalyses (2E,6E)-farnesyl diphosphate = selina-4(15),7(11)-diene + diphosphate. Its pathway is secondary metabolite biosynthesis; terpenoid biosynthesis. Its function is as follows. Catalyzes the conversion of (2E,6E)-farnesyl diphosphate (FPP) to yield the bicyclic sesquiterpene selina-4(15),7(11)-diene via a 1,10-cyclization, which requires the abstraction of the pyrophosphate from FPP leading to a (E,E)-germacradienyl cation. The only accepted substrate is (2E,6E)-farnesyl diphosphate (FPP). The sequence is that of Selina-4(15),7(11)-diene synthase ((2E,6E)-farnesyl diphosphate cyclizing) from Streptomyces pristinaespiralis (strain ATCC 25486 / DSM 40338 / CBS 914.69 / JCM 4507 / KCC S-0507 / NBRC 13074 / NRRL 2958 / 5647).